The sequence spans 367 residues: Nociceptin receptor (367 aa).

Residues 1 to 45 are Extracellular-facing; that stretch reads MESLFPAPYWEVLYGSHFQGNLSLLNETVPHHLLLNASHSAFLPL. N21, N26, and N36 each carry an N-linked (GlcNAc...) asparagine glycan. A helical transmembrane segment spans residues 46 to 71; sequence GLKVTIVGLYLAVCIGGLLGNCLVMY. At 72 to 84 the chain is on the cytoplasmic side; sequence VILRHTKMKTATN. A helical membrane pass occupies residues 85–106; that stretch reads IYIFNLALADTLVLLTLPFQGT. Residues 107-121 lie on the Extracellular side of the membrane; the sequence is DILLGFWPFGNALCK. Residues C120 and C197 are joined by a disulfide bond. A helical membrane pass occupies residues 122-143; the sequence is TVIAIDYYNMFTSTFTLTAMSV. The Cytoplasmic portion of the chain corresponds to 144 to 162; the sequence is DRYVAICHPIRALDVRTSS. Residues 163-185 form a helical membrane-spanning segment; that stretch reads KAQAVNVAIWALASVVGVPVAIM. The Extracellular segment spans residues 186–208; sequence GSAQVEDEEIECLVEIPAPQDYW. Residues 209–233 form a helical membrane-spanning segment; sequence GPVFAICIFLFSFIIPVLIISVCYS. Over 234–261 the chain is Cytoplasmic; the sequence is LMIRRLRGVRLLSGSREKDRNLRRITRL. A helical membrane pass occupies residues 262–282; it reads VLVVVAVFVGCWTPVQVFVLV. Over 283–297 the chain is Extracellular; it reads QGLGVQPGSETAVAI. The helical transmembrane segment at 298-319 threads the bilayer; it reads LRFCTALGYVNSCLNPILYAFL. Residues 320-367 lie on the Cytoplasmic side of the membrane; it reads DENFKACFRKFCCASSLHREMQVSDRVRSIAKDVGLGCKTSETVPRPA. A lipid anchor (S-palmitoyl cysteine) is attached at C331.

It belongs to the G-protein coupled receptor 1 family. In terms of processing, phosphorylation at Ser-360 requires GRK3. In terms of tissue distribution, highly expressed in several brain areas, the intestine, liver and spleen. Detected in sympathetic stellate ganglion neurons.

It is found in the cell membrane. The protein resides in the cytoplasmic vesicle. Its function is as follows. G-protein coupled opioid receptor that functions as a receptor for the endogenous neuropeptide nociceptin. Ligand binding causes a conformation change that triggers signaling via guanine nucleotide-binding proteins (G proteins) and modulates the activity of down-stream effectors. Signaling via G proteins mediates inhibition of adenylate cyclase activity and calcium channel activity. Arrestins modulate signaling via G proteins and mediate the activation of alternative signaling pathways that lead to the activation of MAP kinases. Plays a role in modulating nociception and the perception of pain. Plays a role in the regulation of locomotor activity by the neuropeptide nociceptin. The polypeptide is Nociceptin receptor (Oprl1) (Rattus norvegicus (Rat)).